An 89-amino-acid chain; its full sequence is MNIRPLADRVLIKPAAAEEKTLGGIIIPDSAKEKPLKGEIVAVGNGTKDEEMVVKVGDNVLYGKYAGTEIELDGEKYLIMRQADVLAII.

This sequence belongs to the GroES chaperonin family. In terms of assembly, heptamer of 7 subunits arranged in a ring. Interacts with the chaperonin GroEL.

It localises to the cytoplasm. Functionally, together with the chaperonin GroEL, plays an essential role in assisting protein folding. The GroEL-GroES system forms a nano-cage that allows encapsulation of the non-native substrate proteins and provides a physical environment optimized to promote and accelerate protein folding. GroES binds to the apical surface of the GroEL ring, thereby capping the opening of the GroEL channel. This Parabacteroides distasonis (strain ATCC 8503 / DSM 20701 / CIP 104284 / JCM 5825 / NCTC 11152) protein is Co-chaperonin GroES.